An 802-amino-acid chain; its full sequence is Osmosensitive cation channel TMEM63C (802 aa).

Residues 1-35 are Extracellular-facing; that stretch reads MTASPESMGQKFRNMTANECFQSRSTVLQGQPFGG. A helical transmembrane segment spans residues 36-60; the sequence is IPTVLLLNIILWVCVVLVYSFLRKA. Residues 61 to 124 lie on the Cytoplasmic side of the membrane; sequence AWDYGRLALL…RDRDLINKCG (64 aa). Phosphoserine occurs at positions 75 and 78. The chain crosses the membrane as a helical span at residues 125-157; sequence EDARIYIMFQYHLIIFVLILCIPSLGIILPVNY. Residues 158–180 are Extracellular-facing; that stretch reads IGSALDWSSHFGRTTIVNVSTES. A helical membrane pass occupies residues 181-205; the sequence is QFLWLHSIFAFMYFLTNFAFMGHHC. The Cytoplasmic segment spans residues 206-401; that stretch reads LGFVPKKNLH…IIWKHLSIRR (196 aa). Residues 402-431 traverse the membrane as a helical segment; sequence FSWWARFIAINTSLFFLFFFLTTPAIIINT. Residues 432-446 lie on the Extracellular side of the membrane; the sequence is IDMYNVTRPIEKLQS. Residues 447–476 form a helical membrane-spanning segment; it reads PVVTQFFPSVLLWAFTVIMPLLVYFSAFLE. The Cytoplasmic portion of the chain corresponds to 477–480; that stretch reads AHWT. A helical transmembrane segment spans residues 481–517; it reads RSNQNLIIMYKCYIFLVFMVVILPSMGLTSLDVFLRW. The Extracellular portion of the chain corresponds to 518–540; it reads LFDIYYLEHATIRFQCVFLPDNG. Residues 541–573 form a helical membrane-spanning segment; sequence AFFINYVITSALFGTGMELMRLGSLCTYCTRLF. At 574 to 593 the chain is on the cytoplasmic side; that stretch reads LSRSEPERVHIRKNLAMDFQ. Residues 594–612 form a helical membrane-spanning segment; that stretch reads FGREYAWMLNVFSVVMAYS. Topologically, residues 613-615 are extracellular; that stretch reads ITC. A helical membrane pass occupies residues 616–640; sequence PIIVPFGLLYLCMKHITDRYNMYYS. The Cytoplasmic portion of the chain corresponds to 641–647; the sequence is YAPTKLN. Residues 648–676 form a helical membrane-spanning segment; it reads AQIHMAAVYQAIFAPLLGLFWMLFFSILR. Topologically, residues 677 to 681 are extracellular; it reads VGSLH. Residues 682–702 traverse the membrane as a helical segment; sequence SITLFSLSSIIISVIIAFSGV. At 703–802 the chain is on the cytoplasmic side; the sequence is FLGKFRIAQQ…EGLELEGQSH (100 aa). Residues 753 to 785 are disordered; the sequence is TPASSPARHTYGTMNSQPEEGEEESGLRGFARE.

The protein belongs to the CSC1 (TC 1.A.17) family. Monomer. Expressed in podocytes of kidney glomeruli.

It localises to the endoplasmic reticulum membrane. The protein resides in the cell membrane. The catalysed reaction is Ca(2+)(in) = Ca(2+)(out). Acts as an osmosensitive cation channel preferentially activated upon hypotonic stress. In contrast to TMEM63B, does not show phospholipid scramblase activity. Enriched in mitochondria-ER contact sites where it may regulate the metabolite flux and organelles' morphologies in response to osmotic changes. In particular may regulate mitochondrial motility and function in motor neuron axons. Required for the functional integrity of the kidney glomerular filtration barrier. The protein is Osmosensitive cation channel TMEM63C (Tmem63c) of Rattus norvegicus (Rat).